Here is a 280-residue protein sequence, read N- to C-terminus: Inner membrane ABC transporter permease protein YcjP (280 aa).

Topologically, residues 1–10 (MATNKRTLSR) are cytoplasmic. Residues 11 to 31 (IGFYCGLALFLIITLFPFFVM) form a helical membrane-spanning segment. Residues 32-53 (LMTSFKGAKEAISLHPTLLPQQ) lie on the Periplasmic side of the membrane. A helical transmembrane segment spans residues 54–74 (WTLEHYVDIFNPMIFPFVDYF). The ABC transmembrane type-1 domain maps to 74–265 (FRNSLVVSVV…LPVVIMYALS (192 aa)). The Cytoplasmic segment spans residues 75-77 (RNS). A helical membrane pass occupies residues 78 to 98 (LVVSVVSSVVAVFLGILGAYA). The Periplasmic portion of the chain corresponds to 99 to 117 (LSRLRFKGRMTINASFYTV). Residues 118 to 138 (YMFSGILLVVPLFKIITALGI) form a helical membrane-spanning segment. Topologically, residues 139–140 (YD) are cytoplasmic. A helical membrane pass occupies residues 141 to 161 (TEMALIITMVTQTLPTAVFML). Over 162–189 (KSYFDTIPDEIEEAAMMDGLNRLQIIFR) the chain is Periplasmic. A helical transmembrane segment spans residues 190–210 (ITVPLAMSGLISVFVYCFMVA). Residues 211-214 (WNDY) lie on the Cytoplasmic side of the membrane. The helical transmembrane segment at 215-235 (LFASIFLSSASNFTLPVGLNA) threads the bilayer. The Periplasmic portion of the chain corresponds to 236-242 (LFSTPDY). Residues 243–263 (IWGRMMAASLVTALPVVIMYA) form a helical membrane-spanning segment. Topologically, residues 264–280 (LSERFIKSGLTAGGVKG) are cytoplasmic.

This sequence belongs to the binding-protein-dependent transport system permease family. MalFG subfamily.

It is found in the cell inner membrane. Its function is as follows. Probably part of the binding-protein-dependent transport system YcjNOP. Probably responsible for the translocation of the substrate across the membrane. The protein is Inner membrane ABC transporter permease protein YcjP (ycjP) of Escherichia coli (strain K12).